Reading from the N-terminus, the 375-residue chain is Probable pectin lyase C (375 aa).

The signal sequence occupies residues 1–20 (MKITSTIPAVLLGLAPLSAA). 2 cysteine pairs are disulfide-bonded: Cys83–Cys100 and Cys92–Cys220. Arg250 is a catalytic residue. Cys317 and Cys325 are joined by a disulfide.

This sequence belongs to the polysaccharide lyase 1 family.

It is found in the secreted. The catalysed reaction is Eliminative cleavage of (1-&gt;4)-alpha-D-galacturonan methyl ester to give oligosaccharides with 4-deoxy-6-O-methyl-alpha-D-galact-4-enuronosyl groups at their non-reducing ends.. Functionally, pectinolytic enzymes consist of four classes of enzymes: pectin lyase, polygalacturonase, pectin methylesterase and rhamnogalacturonase. Among pectinolytic enzymes, pectin lyase is the most important in depolymerization of pectin, since it cleaves internal glycosidic bonds of highly methylated pectins. The protein is Probable pectin lyase C (pelC) of Aspergillus oryzae (strain ATCC 42149 / RIB 40) (Yellow koji mold).